Consider the following 845-residue polypeptide: Beta-mannosidase B (845 aa).

N-linked (GlcNAc...) asparagine glycosylation occurs at asparagine 252. Glutamate 432 functions as the Proton donor in the catalytic mechanism. 2 N-linked (GlcNAc...) asparagine glycosylation sites follow: asparagine 717 and asparagine 723.

The protein belongs to the glycosyl hydrolase 2 family. Beta-mannosidase B subfamily.

It carries out the reaction Hydrolysis of terminal, non-reducing beta-D-mannose residues in beta-D-mannosides.. Its pathway is glycan metabolism; N-glycan degradation. In terms of biological role, exoglycosidase that cleaves the single beta-linked mannose residue from the non-reducing end of beta-mannosidic oligosaccharides of various complexity and length. Prefers mannobiose over mannotriose and has no activity against polymeric mannan. Is also severely restricted by galactosyl substitutions at the +1 subsite. This is Beta-mannosidase B (mndB) from Aspergillus fumigatus (strain CBS 144.89 / FGSC A1163 / CEA10) (Neosartorya fumigata).